The following is a 101-amino-acid chain: Aspartyl/glutamyl-tRNA(Asn/Gln) amidotransferase subunit C (101 aa).

It belongs to the GatC family. Heterotrimer of A, B and C subunits.

The enzyme catalyses L-glutamyl-tRNA(Gln) + L-glutamine + ATP + H2O = L-glutaminyl-tRNA(Gln) + L-glutamate + ADP + phosphate + H(+). The catalysed reaction is L-aspartyl-tRNA(Asn) + L-glutamine + ATP + H2O = L-asparaginyl-tRNA(Asn) + L-glutamate + ADP + phosphate + 2 H(+). Functionally, allows the formation of correctly charged Asn-tRNA(Asn) or Gln-tRNA(Gln) through the transamidation of misacylated Asp-tRNA(Asn) or Glu-tRNA(Gln) in organisms which lack either or both of asparaginyl-tRNA or glutaminyl-tRNA synthetases. The reaction takes place in the presence of glutamine and ATP through an activated phospho-Asp-tRNA(Asn) or phospho-Glu-tRNA(Gln). The protein is Aspartyl/glutamyl-tRNA(Asn/Gln) amidotransferase subunit C of Lactobacillus delbrueckii subsp. bulgaricus (strain ATCC 11842 / DSM 20081 / BCRC 10696 / JCM 1002 / NBRC 13953 / NCIMB 11778 / NCTC 12712 / WDCM 00102 / Lb 14).